Here is a 432-residue protein sequence, read N- to C-terminus: MNFTKSEALHKEALEHIVGGVNSPSRSFKAVGGGSPVAMERGKGAYFWDVDGNKYIDYLAAYGPIITGHAHPHITKAITTAAENGVLYGTPTALEVKFAKMLKEAMPALDKVRFVNSGTESVMTTIRVARAYTGRTKIMKFAGCYHGHSDLVLVAAGSGPSTLGTPDSAGVPQSIAQEVITVPFNNVETLKEALDKWGHEVAAILVEPIVGNFGIVEPKPGFLEKVNELVHEAGALVIYDEVITAFRFMYGGAQDLLGVTPDLTALGKVIGGGLPIGAYGGKKEIMEQVAPLGPAYQAGTMAGNPASMASGIACLEVLQQKGVYEKLDELGAMLEKGILEQATKHNIDITVNRLKGALTVYFTTNTIEDYDAAKNTDGEMFGRFFKLMLQEGINLAPSKYEAWFLTTEHTKEDIEYTIEAVGRAFAALADNK.

Lysine 268 carries the post-translational modification N6-(pyridoxal phosphate)lysine.

This sequence belongs to the class-III pyridoxal-phosphate-dependent aminotransferase family. HemL subfamily. Homodimer. It depends on pyridoxal 5'-phosphate as a cofactor.

Its subcellular location is the cytoplasm. It catalyses the reaction (S)-4-amino-5-oxopentanoate = 5-aminolevulinate. The protein operates within porphyrin-containing compound metabolism; protoporphyrin-IX biosynthesis; 5-aminolevulinate from L-glutamyl-tRNA(Glu): step 2/2. In Bacillus mycoides (strain KBAB4) (Bacillus weihenstephanensis), this protein is Glutamate-1-semialdehyde 2,1-aminomutase 1.